The chain runs to 354 residues: Uroporphyrinogen decarboxylase (354 aa).

Substrate is bound by residues 27 to 31 (RQAGR), Asp77, Tyr154, Ser209, and His327.

It belongs to the uroporphyrinogen decarboxylase family. Homodimer.

Its subcellular location is the cytoplasm. The catalysed reaction is uroporphyrinogen III + 4 H(+) = coproporphyrinogen III + 4 CO2. It participates in porphyrin-containing compound metabolism; protoporphyrin-IX biosynthesis; coproporphyrinogen-III from 5-aminolevulinate: step 4/4. Catalyzes the decarboxylation of four acetate groups of uroporphyrinogen-III to yield coproporphyrinogen-III. This Pseudoalteromonas translucida (strain TAC 125) protein is Uroporphyrinogen decarboxylase.